A 485-amino-acid polypeptide reads, in one-letter code: Glutamyl-tRNA(Gln) amidotransferase subunit A (485 aa).

Catalysis depends on charge relay system residues lysine 82 and serine 157. The active-site Acyl-ester intermediate is serine 181.

It belongs to the amidase family. GatA subfamily. In terms of assembly, heterotrimer of A, B and C subunits.

It catalyses the reaction L-glutamyl-tRNA(Gln) + L-glutamine + ATP + H2O = L-glutaminyl-tRNA(Gln) + L-glutamate + ADP + phosphate + H(+). Functionally, allows the formation of correctly charged Gln-tRNA(Gln) through the transamidation of misacylated Glu-tRNA(Gln) in organisms which lack glutaminyl-tRNA synthetase. The reaction takes place in the presence of glutamine and ATP through an activated gamma-phospho-Glu-tRNA(Gln). This chain is Glutamyl-tRNA(Gln) amidotransferase subunit A, found in Treponema denticola (strain ATCC 35405 / DSM 14222 / CIP 103919 / JCM 8153 / KCTC 15104).